A 390-amino-acid chain; its full sequence is UDP-galactose translocator (390 aa).

Residues 1-24 (MAAVGVGGSTAAAGAGAVSSGALE) are disordered. Transmembrane regions (helical) follow at residues 3 to 23 (AVGVGGSTAAAGAGAVSSGAL), 37 to 57 (YISLAVLVVQNASLILSIRYA), 65 to 85 (FFATTAVVMAEVLKGLTCLLL), 97 to 117 (LVLFLHEAVLVQYVDTLKLAV), 140 to 160 (TFQVTYQLKILTTALFSVLML), 169 to 189 (WASLLLLFTGVAIVQAQQAGG), 200 to 220 (GAGLAAVVASCLSSGFAGVYF), 238 to 258 (LGLFGTALGLVGLWWAEGTAV), 269 to 289 (PAVWGVVLNQAFGGLLVAVVV), and 315 to 335 (LFGFHLDPLFALGAGLVIGAV). Residues 9 to 22 (STAAAGAGAVSSGA) show a composition bias toward low complexity. The disordered stretch occupies residues 356–390 (PCIHQQPPGQPPPPQLSSRGDLTTEPFLPKSVLVK).

The protein belongs to the nucleotide-sugar transporter family. SLC35A subfamily. Interacts with SLC35A3; the interaction is reduced in the presence of SLC35A4. Found in a complex with SLC35A3 and SLC35A4.

It is found in the golgi apparatus membrane. It catalyses the reaction UMP(out) + UDP-alpha-D-galactose(in) = UMP(in) + UDP-alpha-D-galactose(out). The catalysed reaction is UDP-N-acetyl-alpha-D-galactosamine(in) + UMP(out) = UDP-N-acetyl-alpha-D-galactosamine(out) + UMP(in). It carries out the reaction UMP(out) + UDP-alpha-D-glucose(in) = UMP(in) + UDP-alpha-D-glucose(out). The enzyme catalyses UMP(out) + UDP-N-acetyl-alpha-D-glucosamine(in) = UMP(in) + UDP-N-acetyl-alpha-D-glucosamine(out). It catalyses the reaction UDP-alpha-D-galactose(in) + AMP(out) = UDP-alpha-D-galactose(out) + AMP(in). The catalysed reaction is UDP-alpha-D-galactose(in) + CMP(out) = UDP-alpha-D-galactose(out) + CMP(in). It carries out the reaction UDP-N-acetyl-alpha-D-galactosamine(out) + UDP-alpha-D-galactose(in) = UDP-N-acetyl-alpha-D-galactosamine(in) + UDP-alpha-D-galactose(out). The enzyme catalyses UDP-N-acetyl-alpha-D-glucosamine(out) + UDP-alpha-D-galactose(in) = UDP-N-acetyl-alpha-D-glucosamine(in) + UDP-alpha-D-galactose(out). It catalyses the reaction UDP-alpha-D-galactose(in) + UDP-alpha-D-glucose(out) = UDP-alpha-D-galactose(out) + UDP-alpha-D-glucose(in). The catalysed reaction is UMP(out) + CMP(in) = UMP(in) + CMP(out). It carries out the reaction UMP(out) + AMP(in) = UMP(in) + AMP(out). Functionally, transports uridine diphosphate galactose (UDP-galactose) from the cytosol into the Golgi apparatus. It functions as an antiporter that exchanges UDP-galactose for UMP. It is also able to exchange UDP-galactose for AMP and CMP, and to transport UDP-N-acetylgalactosamine (UDP-GalNAc) and other nucleotide sugars. As a provider of UDP-galactose to galactosyltransferases present in the Golgi apparatus, it is necessary for globotriaosylceramide/globoside (Gb3Cer) synthesis from lactosylceramide. The sequence is that of UDP-galactose translocator from Mus musculus (Mouse).